Consider the following 336-residue polypeptide: Phenylalanine--tRNA ligase alpha subunit (336 aa).

Glu257 contributes to the Mg(2+) binding site.

This sequence belongs to the class-II aminoacyl-tRNA synthetase family. Phe-tRNA synthetase alpha subunit type 1 subfamily. Tetramer of two alpha and two beta subunits. Requires Mg(2+) as cofactor.

It is found in the cytoplasm. It carries out the reaction tRNA(Phe) + L-phenylalanine + ATP = L-phenylalanyl-tRNA(Phe) + AMP + diphosphate + H(+). The polypeptide is Phenylalanine--tRNA ligase alpha subunit (Xanthomonas campestris pv. campestris (strain 8004)).